The primary structure comprises 252 residues: LexA repressor (252 aa).

Residues M1–R46 form a disordered region. Positions I67–K87 form a DNA-binding region, H-T-H motif. Residues S176 and K213 each act as for autocatalytic cleavage activity in the active site.

Belongs to the peptidase S24 family. In terms of assembly, homodimer.

The catalysed reaction is Hydrolysis of Ala-|-Gly bond in repressor LexA.. Functionally, represses a number of genes involved in the response to DNA damage (SOS response), including recA and lexA. In the presence of single-stranded DNA, RecA interacts with LexA causing an autocatalytic cleavage which disrupts the DNA-binding part of LexA, leading to derepression of the SOS regulon and eventually DNA repair. This chain is LexA repressor, found in Thermobifida fusca (strain YX).